The following is a 551-amino-acid chain: MNTISPVVIEPRHGGEHHSVNVKYGIIIFAISVIHILFFLLVKFIEINRWKSNGRFNKSLWKLNNTPTWMLITLWILIIFFIGGANITEFSEEYITIAKRYGRIAYCLLPLNIYLILRPTNCVYLKPGYYLENLSLHKWLSRLISICTLIHAIGYFYKWNKEGKILIKSFRFLNFLGIVVFVMFAVLIIVSIRILRRKYYSLFYIIHNITAWSMVVLIIFHARPGVTIFGIICLILMCYQLLYLRFYKSYPVNNLKIVDIPMSTLQIIKIPKPSNFPTWLPGSHVRLNYTTSNIKSWINSSHPFTIANIPEDGVNYLSLVIKKPGNFIIDQYLTYLLTGPYISIDYPFYNSANLINIICGGSGISFGLPILNHYKSLNSNIPIKLIWCVRNRNDCFIMNQLDMTNVEVFITSAGDSSSDEQSPSSSSYQPVPLFVVDDEQDESHAKVEQTQGEEEVDGLLNQDENGIPLQSMKKESFPKKEEGEDEEKSSKDVFKYGRPKFDEVFAIDDPTLNPNYNDSWVIACGPDQLIEDAKYWSQEKGYRFFSEKYEM.

Transmembrane regions (helical) follow at residues 25-45, 67-87, 100-117, 138-155, 172-192, 199-221, and 225-247; these read GIII…VKFI, PTWM…GANI, RYGR…YLIL, KWLS…AIGY, FLNF…IVSI, YYSL…IIFH, and GVTI…LRFY. Positions 102–217 constitute a Ferric oxidoreductase domain; sequence GRIAYCLLPL…NITAWSMVVL (116 aa). Residues 247-369 form the FAD-binding FR-type domain; it reads YKSYPVNNLK…GGSGISFGLP (123 aa). Positions 440–492 are disordered; sequence QDESHAKVEQTQGEEEVDGLLNQDENGIPLQSMKKESFPKKEEGEDEEKSSKD. Positions 472-492 are enriched in basic and acidic residues; it reads MKKESFPKKEEGEDEEKSSKD.

Belongs to the ferric reductase (FRE) family. AIM14 subfamily.

The protein resides in the membrane. In terms of biological role, probable cell surface metalloreductase. May be involved in iron or copper homeostasis. In Candida tropicalis (strain ATCC MYA-3404 / T1) (Yeast), this protein is Probable metalloreductase AIM14 (AIM14).